Reading from the N-terminus, the 318-residue chain is Bis(5'-nucleosyl)-tetraphosphatase, symmetrical (318 aa).

The disordered stretch occupies residues 269-318; that stretch reads PGREVTGPAPVARAPRRPRERLGRQRSRGNRGNAGNTAVPAKPPVDTPQD. Over residues 282 to 297 the composition is skewed to basic residues; the sequence is APRRPRERLGRQRSRG. The segment covering 309-318 has biased composition (pro residues); that stretch reads AKPPVDTPQD.

The protein belongs to the Ap4A hydrolase family.

It catalyses the reaction P(1),P(4)-bis(5'-adenosyl) tetraphosphate + H2O = 2 ADP + 2 H(+). Hydrolyzes diadenosine 5',5'''-P1,P4-tetraphosphate to yield ADP. This Xanthomonas oryzae pv. oryzae (strain PXO99A) protein is Bis(5'-nucleosyl)-tetraphosphatase, symmetrical.